The primary structure comprises 424 residues: Chitinase CLP (424 aa).

The N-terminal stretch at 1-18 is a signal peptide; sequence MSLHLLLAVSLCVALASS. Residues 43–405 enclose the Peptidase A1 domain; the sequence is AATSLYTVPI…DEEKQRLGFS (363 aa). Asn139, Asn345, and Asn419 each carry an N-linked (GlcNAc...) asparagine glycan.

This sequence belongs to the peptidase A1 family. In terms of tissue distribution, expressed in roots. Expressed at low levels in leaf sheaths, stems and flowers.

Its subcellular location is the secreted. It localises to the extracellular space. It is found in the apoplast. It catalyses the reaction Random endo-hydrolysis of N-acetyl-beta-D-glucosaminide (1-&gt;4)-beta-linkages in chitin and chitodextrins.. Functionally, chitinase that possesses antifungal activity. Inhibits the growth of the fungal pathogen Rhizoctonia solani by degrading the fungal cell wall. Does not possess inhibiting activity against fungal endo-1,4-beta-D-xylanases belonging to glycoside hydrolase family 10 (GH10) and family 11 (GH11). Involved in the regulation of plant growth by regulating the intracellular calcium ion concentration in roots. The chain is Chitinase CLP from Oryza sativa subsp. japonica (Rice).